A 345-amino-acid polypeptide reads, in one-letter code: Anthranilate phosphoribosyltransferase 1 (345 aa).

Residues Gly86, 89–90, Thr94, 96–99, 114–122, and Ser126 each bind 5-phospho-alpha-D-ribose 1-diphosphate; these read GD, NIST, and KHGGRGVSS. Gly86 provides a ligand contact to anthranilate. Mg(2+) is bound at residue Ser98. Arg172 is an anthranilate binding site. Asp231 and Glu232 together coordinate Mg(2+).

Belongs to the anthranilate phosphoribosyltransferase family. In terms of assembly, homodimer. It depends on Mg(2+) as a cofactor.

It carries out the reaction N-(5-phospho-beta-D-ribosyl)anthranilate + diphosphate = 5-phospho-alpha-D-ribose 1-diphosphate + anthranilate. It functions in the pathway amino-acid biosynthesis; L-tryptophan biosynthesis; L-tryptophan from chorismate: step 2/5. Its function is as follows. Catalyzes the transfer of the phosphoribosyl group of 5-phosphorylribose-1-pyrophosphate (PRPP) to anthranilate to yield N-(5'-phosphoribosyl)-anthranilate (PRA). This is Anthranilate phosphoribosyltransferase 1 from Ralstonia nicotianae (strain ATCC BAA-1114 / GMI1000) (Ralstonia solanacearum).